Consider the following 355-residue polypeptide: Guanine nucleotide-binding protein G(i) subunit alpha-2 (355 aa).

Gly2 carries N-myristoyl glycine lipidation. Residue Cys3 is the site of S-palmitoyl cysteine attachment. Residues 32–355 form the G-alpha domain; sequence REVKLLLLGA…KNNLKDCGLF (324 aa). A G1 motif region spans residues 35 to 48; sequence KLLLLGAGESGKST. Residues 40-47, 176-182, 201-205, 270-273, and Ala327 each bind GTP; these read GAGESGKS, LRTRVKT, DVGGQ, and NKKD. Positions 47 and 182 each coordinate Mg(2+). The G2 motif stretch occupies residues 174–182; the sequence is DVLRTRVKT. The interval 197 to 206 is G3 motif; it reads FKMFDVGGQR. Residues 266–273 are G4 motif; the sequence is ILFLNKKD. Residues 325–330 are G5 motif; that stretch reads TCATDT.

This sequence belongs to the G-alpha family. G(i/o/t/z) subfamily. As to quaternary structure, g proteins are composed of 3 units; alpha, beta and gamma. The alpha chain contains the guanine nucleotide binding site. In this context, interacts with GNB2. Interacts with UNC5B. Interacts with GPSM1. Interacts with RGS12 and RGS14. Interacts (inactive GDP-bound form) with NUCB1 (via GBA motif); the interaction leads to activation of GNAI3. Interacts (inactive GDP-bound form) with CCDC88C/DAPLE (via GBA motif). Interacts (inactive GDP-bound form) with CCDC8A/GIV (via GBA motif).

The protein localises to the cytoplasm. The protein resides in the cell membrane. Its subcellular location is the cytoskeleton. It is found in the microtubule organizing center. It localises to the centrosome. The protein localises to the membrane. Guanine nucleotide-binding proteins (G proteins) are involved as modulators or transducers in various transmembrane signaling systems. The G(i) proteins are involved in hormonal regulation of adenylate cyclase: they inhibit the cyclase in response to beta-adrenergic stimuli. May play a role in cell division. The protein is Guanine nucleotide-binding protein G(i) subunit alpha-2 (Gnai2) of Rattus norvegicus (Rat).